The primary structure comprises 62 residues: Probable tautomerase RSc0807 (62 aa).

The active-site Proton acceptor; via imino nitrogen is the Pro2.

Belongs to the 4-oxalocrotonate tautomerase family.

In Ralstonia nicotianae (strain ATCC BAA-1114 / GMI1000) (Ralstonia solanacearum), this protein is Probable tautomerase RSc0807.